The following is an 85-amino-acid chain: Conotoxin Mi15b (85 aa).

The signal sequence occupies residues 1-23 (MEKLTVLILVAIVLLTIQVLGQS). Residues 24–49 (DRDKHPKRRPRQYATKRLSALMKGHR) constitute a propeptide that is removed on maturation. Glutamine 50 is subject to Pyrrolidone carboxylic acid.

It belongs to the conotoxin O2 superfamily. Post-translationally, contains 4 disulfide bonds. In terms of tissue distribution, expressed by the venom duct.

The protein localises to the secreted. The protein is Conotoxin Mi15b of Conus miles (Soldier cone).